The primary structure comprises 593 residues: Proline--tRNA ligase (593 aa).

Belongs to the class-II aminoacyl-tRNA synthetase family. ProS type 1 subfamily. As to quaternary structure, homodimer.

It is found in the cytoplasm. The enzyme catalyses tRNA(Pro) + L-proline + ATP = L-prolyl-tRNA(Pro) + AMP + diphosphate. Its function is as follows. Catalyzes the attachment of proline to tRNA(Pro) in a two-step reaction: proline is first activated by ATP to form Pro-AMP and then transferred to the acceptor end of tRNA(Pro). As ProRS can inadvertently accommodate and process non-cognate amino acids such as alanine and cysteine, to avoid such errors it has two additional distinct editing activities against alanine. One activity is designated as 'pretransfer' editing and involves the tRNA(Pro)-independent hydrolysis of activated Ala-AMP. The other activity is designated 'posttransfer' editing and involves deacylation of mischarged Ala-tRNA(Pro). The misacylated Cys-tRNA(Pro) is not edited by ProRS. The chain is Proline--tRNA ligase from Parasynechococcus marenigrum (strain WH8102).